Consider the following 113-residue polypeptide: Antisense of depressing factor protein 1 (113 aa).

Positions 1–11 (MGKCSMKKKGV) are enriched in basic residues. The disordered stretch occupies residues 1 to 35 (MGKCSMKKKGVGKNVGVGKKVQKKRSISTAERKRT).

Belongs to the ADF1 family.

It localises to the nucleus. Transcriptional repressor which negatively regulates transcription of FYV5 by binding to the promoter on the sense strand. The protein is Antisense of depressing factor protein 1 of Saccharomyces cerevisiae (strain ATCC 204508 / S288c) (Baker's yeast).